The primary structure comprises 466 residues: Soluble pyridine nucleotide transhydrogenase (466 aa).

Position 36 to 45 (36 to 45 (ERYQNVGGGC)) interacts with FAD.

The protein belongs to the class-I pyridine nucleotide-disulfide oxidoreductase family. FAD is required as a cofactor.

It is found in the cytoplasm. The enzyme catalyses NAD(+) + NADPH = NADH + NADP(+). In terms of biological role, conversion of NADPH, generated by peripheral catabolic pathways, to NADH, which can enter the respiratory chain for energy generation. In Shigella boydii serotype 18 (strain CDC 3083-94 / BS512), this protein is Soluble pyridine nucleotide transhydrogenase.